The chain runs to 97 residues: Aspartyl/glutamyl-tRNA(Asn/Gln) amidotransferase subunit C (97 aa).

The protein belongs to the GatC family. As to quaternary structure, heterotrimer of A, B and C subunits.

It carries out the reaction L-glutamyl-tRNA(Gln) + L-glutamine + ATP + H2O = L-glutaminyl-tRNA(Gln) + L-glutamate + ADP + phosphate + H(+). It catalyses the reaction L-aspartyl-tRNA(Asn) + L-glutamine + ATP + H2O = L-asparaginyl-tRNA(Asn) + L-glutamate + ADP + phosphate + 2 H(+). Allows the formation of correctly charged Asn-tRNA(Asn) or Gln-tRNA(Gln) through the transamidation of misacylated Asp-tRNA(Asn) or Glu-tRNA(Gln) in organisms which lack either or both of asparaginyl-tRNA or glutaminyl-tRNA synthetases. The reaction takes place in the presence of glutamine and ATP through an activated phospho-Asp-tRNA(Asn) or phospho-Glu-tRNA(Gln). The protein is Aspartyl/glutamyl-tRNA(Asn/Gln) amidotransferase subunit C of Synechococcus sp. (strain CC9311).